The following is a 713-amino-acid chain: Forkhead box protein P2 (713 aa).

A compositionally biased stretch (polar residues) spans 1–28; sequence MMQESATETISNSSMNQNGMSTLSSQLD. 2 disordered regions span residues 1–45 and 279–337; these read MMQE…SEVS and DNGI…TGAS. The span at 290-303 shows a compositional bias: low complexity; sequence TTNNSSSTTSSTTS. Residues 313-322 show a composition bias toward polar residues; it reads SIVNGQSSVL. The span at 324–335 shows a compositional bias: basic and acidic residues; it reads ARRDSSSHEETG. The segment at 344-369 adopts a C2H2-type zinc-finger fold; the sequence is GVCKWPGCESICEDFGQFLKHLNNEH. The interval 386 to 407 is leucine-zipper; sequence VQQLEIQLSKERERLQAMMTHL. The interval 420–424 is CTBP1-binding; it reads PLNLV. Low complexity predominate over residues 436–457; that stretch reads TSPQSLPQTPTTPTAPVTPITQ. Residues 436 to 463 are disordered; it reads TSPQSLPQTPTTPTAPVTPITQGPSVIT. The fork-head DNA-binding region spans 502–592; that stretch reads RPPFTYATLI…SQKITGSPTL (91 aa). Disordered regions lie at residues 647–666 and 676–713; these read LDHIDSNGNSSPGCSPQPHI and VIAEDEDCPMSLVTTANHSPELEDDREIEEEPLSEDLE. Residues 697 to 713 show a composition bias toward acidic residues; sequence LEDDREIEEEPLSEDLE.

As to quaternary structure, forms homodimers and heterodimers with FOXP1 and FOXP4. Dimerization is required for DNA-binding. Interacts with CTBP1. Interacts with FOXP1. Interacts with TBR1. Interacts with ZMYM2.

It is found in the nucleus. Transcriptional repressor that may play a role in the specification and differentiation of lung epithelium. May also play a role in developing neural, gastrointestinal and cardiovascular tissues. Can act with CTBP1 to synergistically repress transcription but CTPBP1 is not essential. Plays a role in synapse formation by regulating SRPX2 levels. This Hylobates lar (Lar gibbon) protein is Forkhead box protein P2 (FOXP2).